The sequence spans 1008 residues: Collagen alpha-2(I) chain (1008 aa).

The disordered stretch occupies residues 1–999; sequence GGFDFSFLPQ…IRGSGGGYDF (999 aa). 4-hydroxyproline is present on residues proline 9, proline 12, proline 45, and proline 51. Positions 38–81 are enriched in low complexity; it reads LMGPRGPPGASGAPGPQGFPAGEPGEPGQTGPAGARGPAGPPGK. Positions 82 to 94 are enriched in basic and acidic residues; sequence ADGHPGKPGRPGE. A 5-hydroxylysine; alternate modification is found at lysine 116. Lysine 116 carries O-linked (Gal...) hydroxylysine; alternate glycosylation. 3 stretches are compositionally biased toward low complexity: residues 164–193, 239–260, and 301–314; these read VGAPGPAGARGSDGSVGPVGPAGPIGSAGP, PGANGLTGAKGAAGLPGVAGAP, and EPGSAGPQGPPGSS. Gly residues predominate over residues 336-345; sequence GLRGGPGSRG. A compositionally biased stretch (low complexity) spans 358–374; the sequence is PAGARGASGPAGVRGPS. A 4-hydroxyproline mark is found at proline 380 and proline 383. The segment covering 409-428 has biased composition (low complexity); the sequence is LPGIDGRPGPIGPAGARGEA. Over residues 455 to 466 the composition is skewed to gly residues; the sequence is GNRGQGGKGEQG. Low complexity-rich tracts occupy residues 513–530 and 542–552; these read PGESGAVGPSGAIGSRGP and EPGVVGAPGTA. The span at 553–562 shows a compositional bias: gly residues; the sequence is GPAGSGGLPG. 2 stretches are compositionally biased toward low complexity: residues 582 to 629 and 636 to 656; these read RGEV…PRGS and VGPAGPNGFAGPAGAAGQPGA. Residues 657–666 are compositionally biased toward basic and acidic residues; it reads KGERGTKGPK. The span at 674–684 shows a compositional bias: low complexity; the sequence is PTGPVGSAGPA. Over residues 694-703 the composition is skewed to gly residues; sequence GSRGDGGPPG. A compositionally biased stretch (low complexity) spans 704–714; sequence ATGFPGAAGRT. The span at 751–760 shows a compositional bias: gly residues; that stretch reads GETGAGGPPG. Composition is skewed to low complexity over residues 768 to 795, 803 to 813, 826 to 842, 862 to 884, and 892 to 907; these read SGEPGTAGPPGTAGPQGLLGAPGILGLP, LPGVAGAVGEP, PPGAVGSPGVNGAPGNP, YAGNAGPVGAAGAPGPHGTVGPA, and EPGPVGSVGPVGALGP. Residues 917–928 show a composition bias toward basic and acidic residues; that stretch reads RGDKGEPGDKGP. Residues 989 to 998 are compositionally biased toward gly residues; it reads GIRGSGGGYD.

It belongs to the fibrillar collagen family. Trimers of one alpha 2(I) and two alpha 1(I) chains. Interacts (via C-terminus) with TMEM131 (via PapD-L domain); the interaction is direct and is involved in assembly and TRAPPIII ER-to-Golgi transport complex-dependent secretion of collagen. Prolines at the third position of the tripeptide repeating unit (G-X-Y) are hydroxylated in some or all of the chains. Expressed in bones.

The protein resides in the secreted. It localises to the extracellular space. Its subcellular location is the extracellular matrix. Type I collagen is a member of group I collagen (fibrillar forming collagen). The chain is Collagen alpha-2(I) chain from Nothrotheriops shastensis (Shasta ground sloth).